A 201-amino-acid polypeptide reads, in one-letter code: Probable nicotinate-nucleotide adenylyltransferase (201 aa).

The protein belongs to the NadD family.

The catalysed reaction is nicotinate beta-D-ribonucleotide + ATP + H(+) = deamido-NAD(+) + diphosphate. Its pathway is cofactor biosynthesis; NAD(+) biosynthesis; deamido-NAD(+) from nicotinate D-ribonucleotide: step 1/1. In terms of biological role, catalyzes the reversible adenylation of nicotinate mononucleotide (NaMN) to nicotinic acid adenine dinucleotide (NaAD). In Bacteroides fragilis (strain YCH46), this protein is Probable nicotinate-nucleotide adenylyltransferase.